Reading from the N-terminus, the 148-residue chain is Large ribosomal subunit protein bL9 (148 aa).

The protein belongs to the bacterial ribosomal protein bL9 family.

Binds to the 23S rRNA. The protein is Large ribosomal subunit protein bL9 of Staphylococcus saprophyticus subsp. saprophyticus (strain ATCC 15305 / DSM 20229 / NCIMB 8711 / NCTC 7292 / S-41).